Reading from the N-terminus, the 448-residue chain is Trigger factor (448 aa).

The PPIase FKBP-type domain occupies 162–243 (DDFAIIDIEA…VQQTKERKLP (82 aa)). Residues 426–448 (DEGKAVDPSEYFGEEEESAEESE) are disordered. Residues 437–448 (FGEEEESAEESE) show a composition bias toward acidic residues.

It belongs to the FKBP-type PPIase family. Tig subfamily.

The protein resides in the cytoplasm. The enzyme catalyses [protein]-peptidylproline (omega=180) = [protein]-peptidylproline (omega=0). In terms of biological role, involved in protein export. Acts as a chaperone by maintaining the newly synthesized protein in an open conformation. Functions as a peptidyl-prolyl cis-trans isomerase. This chain is Trigger factor, found in Corynebacterium diphtheriae (strain ATCC 700971 / NCTC 13129 / Biotype gravis).